The chain runs to 663 residues: DNA topoisomerase 4 subunit B (663 aa).

ATP is bound by residues tyrosine 7, asparagine 47, aspartate 74, 114–120 (GLHGVGA), and lysine 341. Residues 386-418 (REAARKAREDARSGKKNKRKDTLLSGKLTPAQS) form a disordered region. Residues 387–398 (EAARKAREDARS) show a composition bias toward basic and acidic residues. Positions 424 to 538 (NELYLVEGDS…AGRVFIALPP (115 aa)) constitute a Toprim domain. Mg(2+) is bound by residues glutamate 430, aspartate 503, and aspartate 505.

The protein belongs to the type II topoisomerase family. ParE type 2 subfamily. As to quaternary structure, heterotetramer composed of ParC and ParE. Mg(2+) serves as cofactor. The cofactor is Mn(2+). Requires Ca(2+) as cofactor.

The catalysed reaction is ATP-dependent breakage, passage and rejoining of double-stranded DNA.. Its function is as follows. Topoisomerase IV is essential for chromosome segregation. It relaxes supercoiled DNA. Performs the decatenation events required during the replication of a circular DNA molecule. The polypeptide is DNA topoisomerase 4 subunit B (Staphylococcus aureus (strain MRSA252)).